We begin with the raw amino-acid sequence, 193 residues long: Mediator of RNA polymerase II transcription subunit 11 (193 aa).

The stretch at 31 to 68 (AREIMQDLGKEKQISKNKMDDNANSFKKLITQVENELS) forms a coiled coil. Residues 115–193 (IEPPTQEVDE…EEEEGEQMEN (79 aa)) are disordered. Acidic residues predominate over residues 121-143 (EVDEDNEDEEDSGDADMLEETPE). Over residues 150–175 (TTSSSATTSDGGSGGADDAASSSAPR) the composition is skewed to low complexity. Residues 184-193 (EEEEGEQMEN) are compositionally biased toward acidic residues.

It belongs to the Mediator complex subunit 11 family. Component of the Mediator complex.

It is found in the nucleus. Functionally, component of the Mediator complex, a coactivator involved in the regulated transcription of nearly all RNA polymerase II-dependent genes. Mediator functions as a bridge to convey information from gene-specific regulatory proteins to the basal RNA polymerase II transcription machinery. Mediator is recruited to promoters by direct interactions with regulatory proteins and serves as a scaffold for the assembly of a functional pre-initiation complex with RNA polymerase II and the general transcription factors. The chain is Mediator of RNA polymerase II transcription subunit 11 (mdt-11) from Caenorhabditis briggsae.